Reading from the N-terminus, the 198-residue chain is Phosphoheptose isomerase (198 aa).

The 163-residue stretch at 36–198 (MIGSLLNNGK…DCLLLGVEDQ (163 aa)) folds into the SIS domain. 51–53 (NGG) contributes to the substrate binding site. Zn(2+) contacts are provided by histidine 60 and glutamate 64. Substrate contacts are provided by residues glutamate 64, 93–94 (ND), 119–121 (STS), serine 124, and glutamine 174. Residues glutamine 174 and histidine 182 each coordinate Zn(2+).

Belongs to the SIS family. GmhA subfamily. Homotetramer. It depends on Zn(2+) as a cofactor.

It is found in the cytoplasm. It catalyses the reaction 2 D-sedoheptulose 7-phosphate = D-glycero-alpha-D-manno-heptose 7-phosphate + D-glycero-beta-D-manno-heptose 7-phosphate. The protein operates within carbohydrate biosynthesis; D-glycero-D-manno-heptose 7-phosphate biosynthesis; D-glycero-alpha-D-manno-heptose 7-phosphate and D-glycero-beta-D-manno-heptose 7-phosphate from sedoheptulose 7-phosphate: step 1/1. In terms of biological role, catalyzes the isomerization of sedoheptulose 7-phosphate in D-glycero-D-manno-heptose 7-phosphate. This Aromatoleum aromaticum (strain DSM 19018 / LMG 30748 / EbN1) (Azoarcus sp. (strain EbN1)) protein is Phosphoheptose isomerase.